The primary structure comprises 356 residues: Malate dehydrogenase, glyoxysomal (356 aa).

Residues 1 to 36 constitute a glyoxysome transit peptide; that stretch reads MEDAAAAARRMERLASHLRPPASQMEESPLLRGSNC. Residues 51–57 and Asp-77 contribute to the NAD(+) site; that span reads GASGGIG. Substrate is bound by residues Arg-124 and Arg-130. NAD(+)-binding positions include Asn-137 and 160–162; that span reads ISN. Substrate is bound by residues Asn-162 and Arg-196. His-220 (proton acceptor) is an active-site residue. Met-271 provides a ligand contact to NAD(+).

This sequence belongs to the LDH/MDH superfamily. MDH type 1 family. In terms of assembly, homodimer.

The protein localises to the glyoxysome. It catalyses the reaction (S)-malate + NAD(+) = oxaloacetate + NADH + H(+). The polypeptide is Malate dehydrogenase, glyoxysomal (Oryza sativa subsp. japonica (Rice)).